The chain runs to 412 residues: DNA utilization protein HofQ (412 aa).

An N-terminal signal peptide occupies residues 1–18 (MKQWIAALLLMLIPGVQA).

This sequence belongs to the bacterial secretin family. PilQ subfamily.

It localises to the cell outer membrane. In terms of biological role, required for the use of extracellular DNA as a nutrient. Could be the porin responsible for transport of DNA across the outer membrane. In Escherichia coli (strain K12), this protein is DNA utilization protein HofQ (hofQ).